The following is a 543-amino-acid chain: 2,3-bisphosphoglycerate-independent phosphoglycerate mutase (543 aa).

Residues aspartate 20 and serine 73 each coordinate Mn(2+). The active-site Phosphoserine intermediate is the serine 73. Residues histidine 134, 166-167 (RD), arginine 198, arginine 204, 278-281 (RGDR), and lysine 360 each bind substrate. Mn(2+)-binding residues include aspartate 428, histidine 432, aspartate 469, histidine 470, and histidine 488.

Belongs to the BPG-independent phosphoglycerate mutase family. In terms of assembly, monomer. Requires Mn(2+) as cofactor.

The catalysed reaction is (2R)-2-phosphoglycerate = (2R)-3-phosphoglycerate. Its pathway is carbohydrate degradation; glycolysis; pyruvate from D-glyceraldehyde 3-phosphate: step 3/5. In terms of biological role, catalyzes the interconversion of 2-phosphoglycerate and 3-phosphoglycerate. This is 2,3-bisphosphoglycerate-independent phosphoglycerate mutase from Rhodopirellula baltica (strain DSM 10527 / NCIMB 13988 / SH1).